We begin with the raw amino-acid sequence, 235 residues long: Ubiquinone/menaquinone biosynthesis C-methyltransferase UbiE (235 aa).

3 residues coordinate S-adenosyl-L-methionine: Thr60, Asp81, and Ser126.

Belongs to the class I-like SAM-binding methyltransferase superfamily. MenG/UbiE family.

It catalyses the reaction a 2-demethylmenaquinol + S-adenosyl-L-methionine = a menaquinol + S-adenosyl-L-homocysteine + H(+). The catalysed reaction is a 2-methoxy-6-(all-trans-polyprenyl)benzene-1,4-diol + S-adenosyl-L-methionine = a 5-methoxy-2-methyl-3-(all-trans-polyprenyl)benzene-1,4-diol + S-adenosyl-L-homocysteine + H(+). It participates in quinol/quinone metabolism; menaquinone biosynthesis; menaquinol from 1,4-dihydroxy-2-naphthoate: step 2/2. It functions in the pathway cofactor biosynthesis; ubiquinone biosynthesis. In terms of biological role, methyltransferase required for the conversion of demethylmenaquinol (DMKH2) to menaquinol (MKH2) and the conversion of 2-polyprenyl-6-methoxy-1,4-benzoquinol (DDMQH2) to 2-polyprenyl-3-methyl-6-methoxy-1,4-benzoquinol (DMQH2). The polypeptide is Ubiquinone/menaquinone biosynthesis C-methyltransferase UbiE (Citrifermentans bemidjiense (strain ATCC BAA-1014 / DSM 16622 / JCM 12645 / Bem) (Geobacter bemidjiensis)).